We begin with the raw amino-acid sequence, 146 residues long: UPF0306 protein CKO_04548 (146 aa).

This sequence belongs to the UPF0306 family.

In Citrobacter koseri (strain ATCC BAA-895 / CDC 4225-83 / SGSC4696), this protein is UPF0306 protein CKO_04548.